The sequence spans 203 residues: Cytochrome c biogenesis CcmF N-terminal-like mitochondrial protein 2 (203 aa).

2 consecutive transmembrane segments (helical) span residues 44 to 64 and 143 to 163; these read IWIL…SWWA and IFLW…FYQM.

Belongs to the CcmF/CycK/Ccl1/NrfE/CcsA family. As to quaternary structure, interacts with CCMFC, CCMFN1, CCMH and CYTC-1.

It localises to the mitochondrion inner membrane. In terms of biological role, forms a complex with CCMFC, CCMFN1 and CCMH that performs the assembly of heme with c-type apocytochromes in mitochondria. The protein is Cytochrome c biogenesis CcmF N-terminal-like mitochondrial protein 2 of Arabidopsis thaliana (Mouse-ear cress).